We begin with the raw amino-acid sequence, 699 residues long: 1,4-alpha-glucan-branching enzyme (699 aa).

Substrate contacts are provided by residues 59–60 and 88–90; these read NE and WAP. W104 contacts (1,4-alpha-D-glucosyl)n. 115–118 lines the substrate pocket; sequence DYGK. Position 140 (K140) interacts with (1,4-alpha-D-glucosyl)n. Phosphotyrosine is present on Y170. 330–333 lines the substrate pocket; that stretch reads EVLR. Residue D354 is the Nucleophile of the active site. Catalysis depends on E409, which acts as the Proton donor.

The protein belongs to the glycosyl hydrolase 13 family. GlgB subfamily. As to quaternary structure, monomer.

It catalyses the reaction Transfers a segment of a (1-&gt;4)-alpha-D-glucan chain to a primary hydroxy group in a similar glucan chain.. It participates in glycan biosynthesis; glycogen biosynthesis. In terms of biological role, glycogen-branching enzyme participates in the glycogen biosynthetic process along with glycogenin and glycogen synthase. Generates alpha-1,6-glucosidic branches from alpha-1,4-linked glucose chains, to increase solubility of the glycogen polymer. The chain is 1,4-alpha-glucan-branching enzyme (GBE1) from Equus caballus (Horse).